Consider the following 183-residue polypeptide: Adenine phosphoribosyltransferase (183 aa).

The protein belongs to the purine/pyrimidine phosphoribosyltransferase family. Homodimer.

It is found in the cytoplasm. The catalysed reaction is AMP + diphosphate = 5-phospho-alpha-D-ribose 1-diphosphate + adenine. Its pathway is purine metabolism; AMP biosynthesis via salvage pathway; AMP from adenine: step 1/1. Functionally, catalyzes a salvage reaction resulting in the formation of AMP, that is energically less costly than de novo synthesis. The sequence is that of Adenine phosphoribosyltransferase from Escherichia coli O157:H7.